The following is a 261-amino-acid chain: Aquaporin-8 (261 aa).

At 1-36 (MSGEQTPMCSMDLPEVKVKTSMAGRCRVFWYEQYVQ) the chain is on the cytoplasmic side. The chain crosses the membrane as a helical span at residues 37–57 (PCIVELVGSALFIFIGCLSVI). Cysteine 53 carries the cysteine persulfide modification. Cysteine 53 is subject to Cysteine sulfenic acid (-SOH). At 58-84 (ENSPNTGLLQPALAHGLALGLIIATLG) the chain is on the extracellular side. Residues 85-105 (NISGGHFNPAVSLAVTVIGGL) traverse the membrane as a helical segment. The NPA 1 motif lies at 92-94 (NPA). The Cytoplasmic portion of the chain corresponds to 106–107 (KT). Residues 108-128 (MLLIPYWISQLFGGLIGAALA) traverse the membrane as a helical segment. At 129–156 (KVVSPEERFWNASGAAFAIVQEQEQVAE) the chain is on the extracellular side. A glycan (N-linked (GlcNAc...) asparagine) is linked at asparagine 139. A helical membrane pass occupies residues 157–177 (ALGIEIILTMLLVLAVCMGAV). At 178 to 183 (NEKTMG) the chain is on the cytoplasmic side. The helical transmembrane segment at 184 to 204 (PLAPFSIGFSVIVDILAGGSI) threads the bilayer. The Extracellular segment spans residues 205–228 (SGACMNPARAFGPAVMAGYWDFHW). An NPA 2 motif is present at residues 210–212 (NPA). The chain crosses the membrane as a helical span at residues 229-249 (IYWLGPLLAGLFVGLLIRLLI). Residues 250-261 (GDEKTRLILKSR) lie on the Cytoplasmic side of the membrane.

This sequence belongs to the MIP/aquaporin (TC 1.A.8) family. In terms of processing, sulfenylation at Cys-53(C53-SOH) when hydrogen peroxide flows through the AQP8 channel, making it susceptible to hydrogen sulfide produced by CBS. Post-translationally, persulfidation at Cys-53 is required to gate AQP8 channel; under stress condition, hydrogen peroxide accumulates in the cell leading to CBS activation that produces hydrogen sulfide inducing persulfidation of oxidized Cys-53 (C53-SOH). N-glycosylated. As to expression, expressed in placenta. Highly expressed in the epithelial layer of gall-bladders. Expressed in heart, kidney, submandibular gland, liver, small intestine, colon, testes, and epididymis. In testes, expressed in spermatogenic cells.

It localises to the cell membrane. The protein localises to the mitochondrion inner membrane. The protein resides in the apical cell membrane. Its subcellular location is the basolateral cell membrane. It is found in the smooth endoplasmic reticulum membrane. The enzyme catalyses H2O(in) = H2O(out). It catalyses the reaction urea(in) = urea(out). It carries out the reaction NH4(+)(in) = NH4(+)(out). The catalysed reaction is H2O2(out) = H2O2(in). The enzyme catalyses formamide(out) = formamide(in). It catalyses the reaction methylamine(out) = methylamine(in). Its activity is regulated as follows. Reversibly gated by a two-step sulfenylation-persulfidation process in cells undergoing diverse stresses. Its function is as follows. Channel that allows the facilitated permeation of water and uncharged molecules, such as hydrogen peroxide and the neutral form of ammonia (NH3), through cellular membranes such as plasma membrane, inner mitochondrial membrane and endoplasmic reticulum membrane of several tissues. The transport of ammonia neutral form induces a parallel transport of proton, at alkaline pH when the concentration of ammonia is high. However, it is unclear whether the transport of proton takes place via the aquaporin or via an endogenous pathway. Also, may transport ammonia analogs such as formamide and methylamine, a transport favourited at basic pH due to the increase of unprotonated (neutral) form, which is expected to favor diffusion. In vitro, may be also permeable to urea but not to glycerol. Does not transport urea or glycerol. The water transport mechanism is mercury- and copper-sensitive and passive in response to osmotic driving forces. At the canicular plasma membrane, mediates the osmotic transport of water toward the bile canaliculus and facilitates the cAMP-induced bile canalicular water secretion, a process involved in bile formation. In addition, mediates the hydrogen peroxide release from hepatocyte mitochondria that modulates the SREBF2-mediated cholesterol synthesis and facilitates the mitochondrial ammonia uptake which is metabolized into urea, mainly under glucagon stimulation. In B cells, transports the CYBB-generated hydrogen peroxide from the external leaflet of the plasma membrane to the cytosol to promote B cell activation and differentiation for signal amplification. In the small intestine and colon system, mediates water transport through mitochondria and apical membrane of epithelial cells. May play an important role in the adaptive response of proximal tubule cells to acidosis possibly facilitating mitochondrial ammonia transport. The protein is Aquaporin-8 of Mus musculus (Mouse).